The primary structure comprises 110 residues: Large ribosomal subunit protein uL22 (110 aa).

It belongs to the universal ribosomal protein uL22 family. In terms of assembly, part of the 50S ribosomal subunit.

Functionally, this protein binds specifically to 23S rRNA; its binding is stimulated by other ribosomal proteins, e.g. L4, L17, and L20. It is important during the early stages of 50S assembly. It makes multiple contacts with different domains of the 23S rRNA in the assembled 50S subunit and ribosome. In terms of biological role, the globular domain of the protein is located near the polypeptide exit tunnel on the outside of the subunit, while an extended beta-hairpin is found that lines the wall of the exit tunnel in the center of the 70S ribosome. This chain is Large ribosomal subunit protein uL22, found in Leptospira borgpetersenii serovar Hardjo-bovis (strain JB197).